The primary structure comprises 154 residues: Putative NADPH-dependent 7-cyano-7-deazaguanine reductase (154 aa).

Residue Asp-52 is the Proton donor of the active site. Residues 67 to 69 and 86 to 87 contribute to the substrate site; these read VES and HE.

Belongs to the GTP cyclohydrolase I family. QueF type 1 subfamily.

Its subcellular location is the cytoplasm. It carries out the reaction 7-aminomethyl-7-carbaguanine + 2 NADP(+) = 7-cyano-7-deazaguanine + 2 NADPH + 3 H(+). The protein operates within tRNA modification; tRNA-queuosine biosynthesis. Functionally, catalyzes the NADPH-dependent reduction of 7-cyano-7-deazaguanine (preQ0) to 7-aminomethyl-7-deazaguanine (preQ1). The protein is Putative NADPH-dependent 7-cyano-7-deazaguanine reductase of Streptococcus pneumoniae serotype 4 (strain ATCC BAA-334 / TIGR4).